Consider the following 226-residue polypeptide: Lipoprotein-releasing system ATP-binding protein LolD (226 aa).

Residues 5–226 (LKATNINKIY…LLRNGHWENY (222 aa)) form the ABC transporter domain. Residue 41 to 48 (GTSGSGKS) participates in ATP binding.

Belongs to the ABC transporter superfamily. Lipoprotein translocase (TC 3.A.1.125) family. As to quaternary structure, the complex is composed of two ATP-binding proteins (LolD) and two transmembrane proteins (LolC and LolE).

It localises to the cell inner membrane. In terms of biological role, part of the ABC transporter complex LolCDE involved in the translocation of mature outer membrane-directed lipoproteins, from the inner membrane to the periplasmic chaperone, LolA. Responsible for the formation of the LolA-lipoprotein complex in an ATP-dependent manner. This Psychrobacter cryohalolentis (strain ATCC BAA-1226 / DSM 17306 / VKM B-2378 / K5) protein is Lipoprotein-releasing system ATP-binding protein LolD.